A 1077-amino-acid chain; its full sequence is Mitogen-activated protein kinase kinase kinase 9 (1077 aa).

The tract at residues 1–40 (MESSRSLLGCLASATAAPPGDDATGAGAEEEEDEEEAAAE) is disordered. Residues 14–27 (ATAAPPGDDATGAG) are compositionally biased toward low complexity. Positions 28-38 (AEEEEDEEEAA) are enriched in acidic residues. In terms of domain architecture, SH3 spans 45–109 (AALPYWTAVF…PSNYVTPRSA (65 aa)). The Protein kinase domain occupies 137 to 405 (LTLEEIIGIG…LTTIEESGFF (269 aa)). ATP is bound by residues 143 to 151 (IGIGGFGKV) and K164. D261 functions as the Proton acceptor in the catalytic mechanism. Residues T297 and T298 each carry the phosphothreonine; by autocatalysis modification. At S301 the chain carries Phosphoserine; by autocatalysis. T305 carries the phosphothreonine; by autocatalysis modification. Leucine-zipper stretches follow at residues 423-444 (IQEM…EEEL) and 458-479 (LRRR…ELNI). Residues 491 to 503 (VKKRKGKFRKSRL) show a composition bias toward basic residues. Disordered regions lie at residues 491-511 (VKKR…GNRI), 526-606 (SPTM…TSGD), 646-713 (EDED…KRGG), 748-790 (LPPE…KKEE), 860-971 (RDPN…PRPS), and 986-1011 (SHAR…CFAS). Residue S526 is modified to Phosphoserine. 2 stretches are compositionally biased toward polar residues: residues 559-568 (PGESSKTWGR) and 693-709 (PVNS…TNSL). Positions 755-767 (PPAREEKKRREGL) are enriched in basic and acidic residues. Over residues 863–880 (NQSLTPTHVTLTAPTQPS) the composition is skewed to polar residues. Low complexity predominate over residues 901-915 (GSRSPSSNGMSPSPG). Polar residues predominate over residues 987–1011 (HARSASPANSSSTETPSNLDSCFAS).

The protein belongs to the protein kinase superfamily. STE Ser/Thr protein kinase family. MAP kinase kinase kinase subfamily. As to quaternary structure, homodimer. It depends on Mg(2+) as a cofactor. In terms of processing, autophosphorylation on serine and threonine residues within the activation loop plays a role in enzyme activation. Thr-305 is likely to be the main autophosphorylation site. Autophosphorylation also occurs on Thr-297 and Ser-301. In terms of tissue distribution, expressed in cochlea and utricle.

The enzyme catalyses L-seryl-[protein] + ATP = O-phospho-L-seryl-[protein] + ADP + H(+). It carries out the reaction L-threonyl-[protein] + ATP = O-phospho-L-threonyl-[protein] + ADP + H(+). With respect to regulation, homodimerization via the leucine zipper domains is required for autophosphorylation of multiple sites in the activation loop and subsequent activation. Autophosphorylation at Thr-305 is the key step in activation of MAP3K9/MLK1 and is required for full phosphorylation. Autophosphorylation at Thr-297 and Ser-301 have been shown to be of secondary importance in the activation of MAP3K9/MLK1. Functionally, serine/threonine kinase which acts as an essential component of the MAP kinase signal transduction pathway. Plays an important role in the cascades of cellular responses evoked by changes in the environment. Once activated, acts as an upstream activator of the MKK/JNK signal transduction cascade through the phosphorylation of MAP2K4/MKK4 and MAP2K7/MKK7 which in turn activate the JNKs. The MKK/JNK signaling pathway regulates stress response via activator protein-1 (JUN) and GATA4 transcription factors. Also plays a role in mitochondrial death signaling pathway, including the release cytochrome c, leading to apoptosis. The sequence is that of Mitogen-activated protein kinase kinase kinase 9 (Map3k9) from Mus musculus (Mouse).